Here is a 286-residue protein sequence, read N- to C-terminus: Protein FAM87A (286 aa).

2 consecutive transmembrane segments (helical) span residues 68–88 (YLHS…ETAL) and 161–181 (SFFV…GDML).

The protein belongs to the FAM87 family.

Its subcellular location is the membrane. The chain is Protein FAM87A (FAM87A) from Homo sapiens (Human).